The sequence spans 804 residues: Serine/threonine-protein kinase ATG1 (804 aa).

Residues 12–308 form the Protein kinase domain; that stretch reads FTIGPEIGRG…FQEFFNDPLI (297 aa). ATP is bound by residues 18 to 26 and lysine 41; that span reads IGRGSFANV. Residue aspartate 158 is the Proton acceptor of the active site. Disordered regions lie at residues 339-364, 395-415, and 455-506; these read TSPP…ERAP, INKS…KGAR, and PSPH…MPIS. Over residues 404–415 the composition is skewed to basic and acidic residues; it reads TVKDGQIKKGAR. A compositionally biased stretch (polar residues) spans 462 to 495; the sequence is NEHSAANPSGPTETQTQRRFSPSSRTSSIGSNRR.

It belongs to the protein kinase superfamily. Ser/Thr protein kinase family. APG1/unc-51/ULK1 subfamily. In terms of assembly, homodimer. Forms a ternary complex with ATG13 and ATG17.

Its subcellular location is the cytoplasm. The protein localises to the preautophagosomal structure membrane. It catalyses the reaction L-seryl-[protein] + ATP = O-phospho-L-seryl-[protein] + ADP + H(+). It carries out the reaction L-threonyl-[protein] + ATP = O-phospho-L-threonyl-[protein] + ADP + H(+). Its function is as follows. Serine/threonine protein kinase involved in the cytoplasm to vacuole transport (Cvt) and found to be essential in autophagy, where it is required for the formation of autophagosomes. Involved in the clearance of protein aggregates which cannot be efficiently cleared by the proteasome. Required for selective autophagic degradation of the nucleus (nucleophagy) as well as for mitophagy which contributes to regulate mitochondrial quantity and quality by eliminating the mitochondria to a basal level to fulfill cellular energy requirements and preventing excess ROS production. Also involved in endoplasmic reticulum-specific autophagic process, in selective removal of ER-associated degradation (ERAD) substrates. Plays a key role in ATG9 and ATG23 cycling through the pre-autophagosomal structure and is necessary to promote ATG18 binding to ATG9 through phosphorylation of ATG9. Catalyzes phosphorylation of ATG4, decreasing the interaction between ATG4 and ATG8 and impairing deconjugation of PE-conjugated forms of ATG8. The chain is Serine/threonine-protein kinase ATG1 from Pichia angusta (Yeast).